A 217-amino-acid polypeptide reads, in one-letter code: Octanoyltransferase (217 aa).

Positions 32–207 constitute a BPL/LPL catalytic domain; that stretch reads SDSPDELWIV…TLSQLLGYQQ (176 aa). Substrate-binding positions include 71–78, 138–140, and 151–153; these read RGGQVTYH, SLG, and GLA. C169 functions as the Acyl-thioester intermediate in the catalytic mechanism.

It belongs to the LipB family.

The protein resides in the cytoplasm. The catalysed reaction is octanoyl-[ACP] + L-lysyl-[protein] = N(6)-octanoyl-L-lysyl-[protein] + holo-[ACP] + H(+). It participates in protein modification; protein lipoylation via endogenous pathway; protein N(6)-(lipoyl)lysine from octanoyl-[acyl-carrier-protein]: step 1/2. Functionally, catalyzes the transfer of endogenously produced octanoic acid from octanoyl-acyl-carrier-protein onto the lipoyl domains of lipoate-dependent enzymes. Lipoyl-ACP can also act as a substrate although octanoyl-ACP is likely to be the physiological substrate. This is Octanoyltransferase from Shewanella sp. (strain MR-7).